The following is a 427-amino-acid chain: Trigger factor (427 aa).

A PPIase FKBP-type domain is found at 163–248 (GDTVVIDFVG…VNEVKAKELP (86 aa)).

This sequence belongs to the FKBP-type PPIase family. Tig subfamily.

The protein resides in the cytoplasm. The catalysed reaction is [protein]-peptidylproline (omega=180) = [protein]-peptidylproline (omega=0). In terms of biological role, involved in protein export. Acts as a chaperone by maintaining the newly synthesized protein in an open conformation. Functions as a peptidyl-prolyl cis-trans isomerase. The sequence is that of Trigger factor (tig) from Lactococcus lactis subsp. lactis (strain IL1403) (Streptococcus lactis).